A 482-amino-acid chain; its full sequence is Scarecrow-like protein 3 (482 aa).

Positions 45-479 (LKPEERGLYL…RPLYSVSAWR (435 aa)) constitute a GRAS domain. Positions 52 to 115 (LYLIHLLLTC…ILKSWPGLYK (64 aa)) are leucine repeat I (LRI). The segment at 134–199 (RRLFFEMFPI…EGPPHLRITG (66 aa)) is VHIID. The VHIID motif lies at 165–169 (VHVID). Residues 209–241 (QMAHRLIEEAEKLDIPFQFNPVVSRLDCLNVEQ) are leucine repeat II (LRII). The tract at residues 250–401 (LAVSSVLQLH…KMLFGEEIKN (152 aa)) is PFYRE. The segment at 302 to 324 (ENDMSNNNGYSPSGDSASSLPLP) is disordered. The span at 305–324 (MSNNNGYSPSGDSASSLPLP) shows a compositional bias: polar residues. The SAW stretch occupies residues 404 to 479 (SCEGFERRER…RPLYSVSAWR (76 aa)).

The protein belongs to the GRAS family. Binds to zinc finger proteins MGP/IDD3, IDD4, IDD5, BIB/IDD9 and JKD/IDD10. Expressed in seedlings, root epidermis, leaves, flowers and siliques.

The protein localises to the nucleus. Functionally, probable transcription factor involved in plant development. This is Scarecrow-like protein 3 from Arabidopsis thaliana (Mouse-ear cress).